A 532-amino-acid chain; its full sequence is E3 ubiquitin-protein ligase MGRN1 (532 aa).

Residue Gly2 is the site of N-myristoyl glycine attachment. The segment at 277-316 (ECVVCLSDLRDTLILPCRHLCLCTSCADTLRYQANNCPIC) adopts an RING-type zinc-finger fold. Positions 384–387 (PSAP) match the Required for TSG101-binding motif. Position 389 is a phosphotyrosine (Tyr389). A disordered region spans residues 419 to 518 (LQKGKTQSKS…QPVPPADIYL (100 aa)). Residues 422–435 (GKTQSKSPDSTLRS) show a composition bias toward polar residues. Phosphoserine is present on residues Ser428, Ser449, Ser452, and Ser501. Residues 442–453 (EEDEEKLSEDSD) are compositionally biased toward acidic residues.

Interacts with MC1R and MC4R. Interacts with TSG101. Interacts with mislocalized cytosolically exposed PRNP; this interaction alters MGRN1 subcellular location and causes lysosomal enlargement. Post-translationally, autoubiquitinated in vitro. In terms of tissue distribution, widely expressed, with highest levels in brain, heart, kidney and liver. In the CNS, especially prominent in the Purkinje cells of the cerebellum. In the skin, expressed in the basal layer of the epidermis and hair follicles, primarily in the outer root sheath. Isoforms 1, 3, 4 and 5 are equally expressed in the liver. Isoforms 1, 3 and 4 are most abundant in brain, kidney and heart, respectively.

The protein localises to the early endosome. It localises to the cytoplasm. Its subcellular location is the cell membrane. The protein resides in the nucleus. It carries out the reaction S-ubiquitinyl-[E2 ubiquitin-conjugating enzyme]-L-cysteine + [acceptor protein]-L-lysine = [E2 ubiquitin-conjugating enzyme]-L-cysteine + N(6)-ubiquitinyl-[acceptor protein]-L-lysine.. It functions in the pathway protein modification; protein ubiquitination. In terms of biological role, E3 ubiquitin-protein ligase. Mediates TSG101 monoubiquitination at multiple sites. Plays a role in the regulation of endosome-to-lysosome trafficking. Impairs MC1R- and MC4R-signaling by competing with GNAS-binding to MCRs and inhibiting agonist-induced cAMP production. Does not inhibit ADRB2-signaling. Does not promote MC1R ubiquitination. Also acts as a negative regulator of hedgehog signaling. The protein is E3 ubiquitin-protein ligase MGRN1 (Mgrn1) of Mus musculus (Mouse).